We begin with the raw amino-acid sequence, 87 residues long: Small ribosomal subunit protein uS15c (87 aa).

This sequence belongs to the universal ribosomal protein uS15 family. As to quaternary structure, part of the 30S ribosomal subunit.

It localises to the plastid. Its subcellular location is the chloroplast. In Nicotiana tabacum (Common tobacco), this protein is Small ribosomal subunit protein uS15c (rps15).